The following is a 316-amino-acid chain: TATA-box-binding protein (316 aa).

Disordered regions lie at residues 1–21 (MDQN…QGAM) and 104–135 (LTTA…ASES). Composition is skewed to low complexity over residues 104-115 (LTTAPLPGTTPL) and 123-133 (MTPITPATPAS). 2 repeat units span residues 142-218 (LQNI…ARVV) and 232-309 (IQNM…YPIL). The DNA site is built by N144, R180, K195, N234, and R271.

It belongs to the TBP family. As to quaternary structure, binds DNA as monomer. Belongs to the TFIID complex together with the TBP-associated factors (TAFs). Part of a TFIID-containing RNA polymerase II pre-initiation complex that is composed of TBP and at least GTF2A1, GTF2A2, GTF2E1, GTF2E2, GTF2F1, GTF2H2, GTF2H3, GTF2H4, GTF2H5, GTF2B, TCEA1, ERCC2, ERCC3, TAF1, TAF2, TAF3, TAF4, TAF5, TAF6, TAF7, TAF8, TAF9, TAF10, TAF11, TAF12 and TAF13. Component of the transcription factor SL1/TIF-IB complex, composed of TBP and at least TAF1A, TAF1B, TAF1C and TAF1D. Association of TBP to form either TFIID or SL1/TIF-IB appears to be mutually exclusive. Interacts with TAF1A, TAF1B and TAF1C. Interacts with TFIIB, NCOA6, DRAP1, DR1 and ELF3. Interacts with SPIB, SNAPC1, SNAPC2 and SNAPC4. Interacts with UTF1. Interacts with BRF2; this interaction promotes recruitment of BRF2 to TATA box-containing promoters. Interacts with UBTF. Interacts with GPBP1. Interacts with CITED2. Interacts with ATF7IP. Interacts with LLPH. Interacts with HSF1 (via transactivation domain). Interacts with GTF2B (via C-terminus); this interaction with promoter-bound TBP guides RNA polymerase II into the pre-initiation complex (PIC). Interacts with PAX5. Interacts with MSX1; the interaction may inhibit MSX1 autoinactivation. Interacts with MSX3. In terms of tissue distribution, ubiquitously expressed.

The protein localises to the nucleus. In terms of biological role, general transcription factor that functions at the core of the DNA-binding multiprotein factor TFIID. Binding of TFIID to the TATA box is the initial transcriptional step of the pre-initiation complex (PIC), playing a role in the activation of eukaryotic genes transcribed by RNA polymerase II. Component of a BRF2-containing transcription factor complex that regulates transcription mediated by RNA polymerase III. Component of the transcription factor SL1/TIF-IB complex, which is involved in the assembly of the PIC (pre-initiation complex) during RNA polymerase I-dependent transcription. The rate of PIC formation probably is primarily dependent on the rate of association of SL1 with the rDNA promoter. SL1 is involved in stabilization of nucleolar transcription factor 1/UBTF on rDNA. The chain is TATA-box-binding protein (Tbp) from Mus musculus (Mouse).